We begin with the raw amino-acid sequence, 156 residues long: Large ribosomal subunit protein uL22 (156 aa).

The interval 114-156 is disordered; it reads VESRPKQEKGGKAGASKASSRAARAQGSKAAAAKKTESKGGTS. Low complexity predominate over residues 127–146; the sequence is GASKASSRAARAQGSKAAAA. Residues 147 to 156 are compositionally biased toward basic and acidic residues; that stretch reads KKTESKGGTS.

Belongs to the universal ribosomal protein uL22 family. As to quaternary structure, part of the 50S ribosomal subunit.

Functionally, this protein binds specifically to 23S rRNA; its binding is stimulated by other ribosomal proteins, e.g. L4, L17, and L20. It is important during the early stages of 50S assembly. It makes multiple contacts with different domains of the 23S rRNA in the assembled 50S subunit and ribosome. Its function is as follows. The globular domain of the protein is located near the polypeptide exit tunnel on the outside of the subunit, while an extended beta-hairpin is found that lines the wall of the exit tunnel in the center of the 70S ribosome. This Mycobacteroides abscessus (strain ATCC 19977 / DSM 44196 / CCUG 20993 / CIP 104536 / JCM 13569 / NCTC 13031 / TMC 1543 / L948) (Mycobacterium abscessus) protein is Large ribosomal subunit protein uL22.